Consider the following 591-residue polypeptide: L-fucose isomerase (591 aa).

Residues Glu-337 and Asp-361 each act as proton acceptor in the active site. Positions 337, 361, and 528 each coordinate Mn(2+).

This sequence belongs to the L-fucose isomerase family. As to quaternary structure, homohexamer. Requires Mn(2+) as cofactor.

Its subcellular location is the cytoplasm. The catalysed reaction is L-fucose = L-fuculose. Its pathway is carbohydrate degradation; L-fucose degradation; L-lactaldehyde and glycerone phosphate from L-fucose: step 1/3. Functionally, converts the aldose L-fucose into the corresponding ketose L-fuculose. This is L-fucose isomerase from Salmonella heidelberg (strain SL476).